Reading from the N-terminus, the 459-residue chain is Chromosomal replication initiator protein DnaA (459 aa).

A domain I, interacts with DnaA modulators region spans residues 1–74; it reads MQKIETFWYF…DEMAQGHFNE (74 aa). The tract at residues 74-122 is domain II; that stretch reads EKIHFKLELKDPAEIKTATIKAPEPKSKEDKKPPTDKAHGTTARKTNPS. The tract at residues 91–123 is disordered; that stretch reads ATIKAPEPKSKEDKKPPTDKAHGTTARKTNPSR. A compositionally biased stretch (basic and acidic residues) spans 96-112; that stretch reads PEPKSKEDKKPPTDKAH. A domain III, AAA+ region region spans residues 123 to 339; it reads RLNPAFTFDA…GALKRVLAYS (217 aa). Residues Gly167, Gly169, Lys170, and Thr171 each coordinate ATP. The segment at 340 to 459 is domain IV, binds dsDNA; sequence RFTGHPISLD…YSTLIHILRG (120 aa).

It belongs to the DnaA family. In terms of assembly, oligomerizes as a right-handed, spiral filament on DNA at oriC.

The protein localises to the cytoplasm. Plays an essential role in the initiation and regulation of chromosomal replication. ATP-DnaA binds to the origin of replication (oriC) to initiate formation of the DNA replication initiation complex once per cell cycle. Binds the DnaA box (a 9 base pair repeat at the origin) and separates the double-stranded (ds)DNA. Forms a right-handed helical filament on oriC DNA; dsDNA binds to the exterior of the filament while single-stranded (ss)DNA is stabiized in the filament's interior. The ATP-DnaA-oriC complex binds and stabilizes one strand of the AT-rich DNA unwinding element (DUE), permitting loading of DNA polymerase. After initiation quickly degrades to an ADP-DnaA complex that is not apt for DNA replication. Binds acidic phospholipids. This chain is Chromosomal replication initiator protein DnaA, found in Nitrosomonas eutropha (strain DSM 101675 / C91 / Nm57).